Reading from the N-terminus, the 279-residue chain is Tryptophan synthase alpha chain (279 aa).

Residues glutamate 50 and aspartate 61 each act as proton acceptor in the active site.

The protein belongs to the TrpA family. Tetramer of two alpha and two beta chains.

The enzyme catalyses (1S,2R)-1-C-(indol-3-yl)glycerol 3-phosphate + L-serine = D-glyceraldehyde 3-phosphate + L-tryptophan + H2O. It participates in amino-acid biosynthesis; L-tryptophan biosynthesis; L-tryptophan from chorismate: step 5/5. In terms of biological role, the alpha subunit is responsible for the aldol cleavage of indoleglycerol phosphate to indole and glyceraldehyde 3-phosphate. This is Tryptophan synthase alpha chain from Sinorhizobium medicae (strain WSM419) (Ensifer medicae).